A 175-amino-acid polypeptide reads, in one-letter code: Protein FanH (175 aa).

An N-terminal signal peptide occupies residues 1-20 (MIKKVPVLLFFMASISITHA). An intrachain disulfide couples C39 to C77.

Its subcellular location is the fimbrium. Its function is as follows. Involved in the biosynthesis of K99 fimbriae. The chain is Protein FanH (fanH) from Escherichia coli.